Here is a 341-residue protein sequence, read N- to C-terminus: tRNA N6-adenosine threonylcarbamoyltransferase (341 aa).

Residues histidine 117 and histidine 121 each coordinate Fe cation. Residues 140-144 (VVSGG), aspartate 173, glycine 186, and asparagine 278 contribute to the substrate site. Aspartate 306 is a binding site for Fe cation.

This sequence belongs to the KAE1 / TsaD family. It depends on Fe(2+) as a cofactor.

It is found in the cytoplasm. The catalysed reaction is L-threonylcarbamoyladenylate + adenosine(37) in tRNA = N(6)-L-threonylcarbamoyladenosine(37) in tRNA + AMP + H(+). Required for the formation of a threonylcarbamoyl group on adenosine at position 37 (t(6)A37) in tRNAs that read codons beginning with adenine. Is involved in the transfer of the threonylcarbamoyl moiety of threonylcarbamoyl-AMP (TC-AMP) to the N6 group of A37, together with TsaE and TsaB. TsaD likely plays a direct catalytic role in this reaction. The sequence is that of tRNA N6-adenosine threonylcarbamoyltransferase from Symbiobacterium thermophilum (strain DSM 24528 / JCM 14929 / IAM 14863 / T).